Consider the following 529-residue polypeptide: Peptide chain release factor 3 (529 aa).

The tr-type G domain occupies 11–280 (ATRRTFAIIS…GLVQWAPPPQ (270 aa)). GTP-binding positions include 20 to 27 (SHPDAGKT), 88 to 92 (DTPGH), and 142 to 145 (NKLD).

Belongs to the TRAFAC class translation factor GTPase superfamily. Classic translation factor GTPase family. PrfC subfamily.

The protein resides in the cytoplasm. Functionally, increases the formation of ribosomal termination complexes and stimulates activities of RF-1 and RF-2. It binds guanine nucleotides and has strong preference for UGA stop codons. It may interact directly with the ribosome. The stimulation of RF-1 and RF-2 is significantly reduced by GTP and GDP, but not by GMP. The protein is Peptide chain release factor 3 of Alcanivorax borkumensis (strain ATCC 700651 / DSM 11573 / NCIMB 13689 / SK2).